The primary structure comprises 107 residues: Nucleoid-associated protein BT_0257 (107 aa).

It belongs to the YbaB/EbfC family. Homodimer.

The protein localises to the cytoplasm. It is found in the nucleoid. In terms of biological role, binds to DNA and alters its conformation. May be involved in regulation of gene expression, nucleoid organization and DNA protection. The polypeptide is Nucleoid-associated protein BT_0257 (Bartonella tribocorum (strain CIP 105476 / IBS 506)).